The following is a 385-amino-acid chain: 1-deoxy-D-xylulose 5-phosphate reductoisomerase (385 aa).

NADPH is bound by residues threonine 10, glycine 11, serine 12, isoleucine 13, asparagine 38, and asparagine 124. Lysine 125 is a 1-deoxy-D-xylulose 5-phosphate binding site. Glutamate 126 serves as a coordination point for NADPH. Aspartate 150 lines the Mn(2+) pocket. Residues serine 151, glutamate 152, serine 176, and histidine 199 each contribute to the 1-deoxy-D-xylulose 5-phosphate site. Glutamate 152 is a Mn(2+) binding site. Residue glycine 205 participates in NADPH binding. The 1-deoxy-D-xylulose 5-phosphate site is built by serine 212, asparagine 217, lysine 218, and glutamate 221. Glutamate 221 is a binding site for Mn(2+).

The protein belongs to the DXR family. It depends on Mg(2+) as a cofactor. Mn(2+) is required as a cofactor.

The catalysed reaction is 2-C-methyl-D-erythritol 4-phosphate + NADP(+) = 1-deoxy-D-xylulose 5-phosphate + NADPH + H(+). The protein operates within isoprenoid biosynthesis; isopentenyl diphosphate biosynthesis via DXP pathway; isopentenyl diphosphate from 1-deoxy-D-xylulose 5-phosphate: step 1/6. Catalyzes the NADPH-dependent rearrangement and reduction of 1-deoxy-D-xylulose-5-phosphate (DXP) to 2-C-methyl-D-erythritol 4-phosphate (MEP). The sequence is that of 1-deoxy-D-xylulose 5-phosphate reductoisomerase from Clostridium acetobutylicum (strain ATCC 824 / DSM 792 / JCM 1419 / IAM 19013 / LMG 5710 / NBRC 13948 / NRRL B-527 / VKM B-1787 / 2291 / W).